The following is a 180-amino-acid chain: NAD(P)H-quinone oxidoreductase subunit I, chloroplastic (180 aa).

4Fe-4S ferredoxin-type domains lie at 55-84 (GRIH…VDWR) and 95-124 (LNYS…MTEE). [4Fe-4S] cluster contacts are provided by Cys-64, Cys-67, Cys-70, Cys-74, Cys-104, Cys-107, Cys-110, and Cys-114.

The protein belongs to the complex I 23 kDa subunit family. As to quaternary structure, NDH is composed of at least 16 different subunits, 5 of which are encoded in the nucleus. It depends on [4Fe-4S] cluster as a cofactor.

The protein resides in the plastid. The protein localises to the chloroplast thylakoid membrane. It catalyses the reaction a plastoquinone + NADH + (n+1) H(+)(in) = a plastoquinol + NAD(+) + n H(+)(out). The catalysed reaction is a plastoquinone + NADPH + (n+1) H(+)(in) = a plastoquinol + NADP(+) + n H(+)(out). In terms of biological role, NDH shuttles electrons from NAD(P)H:plastoquinone, via FMN and iron-sulfur (Fe-S) centers, to quinones in the photosynthetic chain and possibly in a chloroplast respiratory chain. The immediate electron acceptor for the enzyme in this species is believed to be plastoquinone. Couples the redox reaction to proton translocation, and thus conserves the redox energy in a proton gradient. This Zea mays (Maize) protein is NAD(P)H-quinone oxidoreductase subunit I, chloroplastic.